The primary structure comprises 197 residues: MAKLYFRYSAMDAGKTLDLLKVAYNYEDRGRKPLVLTSAIDKRAGLNKVKSRIGINQDAYSLTDRDNIFEFVENYNSSNKIDCVLIDEIHFFTQEQVWQLAEIVDELNIPVICYGLRTNYLGQPFETAALLLAIADTLEEVKTICHCGKKASFNMMVQNGKAIKQGNPIVVDDDSLKEIDTKYVSVCRKHWKEGVYE.

ATP contacts are provided by residues 9-16 (SAMDAGKT) and 87-90 (DEIH). Residue E88 is the Proton acceptor of the active site. Zn(2+) is bound by residues C145, C147, C187, and H190.

It belongs to the thymidine kinase family. Homotetramer.

The protein resides in the cytoplasm. The enzyme catalyses thymidine + ATP = dTMP + ADP + H(+). This is Thymidine kinase from Francisella tularensis subsp. tularensis (strain SCHU S4 / Schu 4).